We begin with the raw amino-acid sequence, 104 residues long: UPF0235 protein RBE_0633 (104 aa).

The protein belongs to the UPF0235 family.

The protein is UPF0235 protein RBE_0633 of Rickettsia bellii (strain RML369-C).